The chain runs to 295 residues: 4-diphosphocytidyl-2-C-methyl-D-erythritol kinase (295 aa).

Lysine 22 is a catalytic residue. 106 to 116 (PAGGGFGGGSS) is an ATP binding site. The active site involves aspartate 148.

Belongs to the GHMP kinase family. IspE subfamily.

The enzyme catalyses 4-CDP-2-C-methyl-D-erythritol + ATP = 4-CDP-2-C-methyl-D-erythritol 2-phosphate + ADP + H(+). The protein operates within isoprenoid biosynthesis; isopentenyl diphosphate biosynthesis via DXP pathway; isopentenyl diphosphate from 1-deoxy-D-xylulose 5-phosphate: step 3/6. Functionally, catalyzes the phosphorylation of the position 2 hydroxy group of 4-diphosphocytidyl-2C-methyl-D-erythritol. The protein is 4-diphosphocytidyl-2-C-methyl-D-erythritol kinase of Xanthomonas euvesicatoria pv. vesicatoria (strain 85-10) (Xanthomonas campestris pv. vesicatoria).